A 521-amino-acid chain; its full sequence is Bifunctional purine biosynthesis protein PurH (521 aa).

The 145-residue stretch at 1–145 (MIKQALISVS…KNHKDVIVIC (145 aa)) folds into the MGS-like domain.

It belongs to the PurH family.

The enzyme catalyses (6R)-10-formyltetrahydrofolate + 5-amino-1-(5-phospho-beta-D-ribosyl)imidazole-4-carboxamide = 5-formamido-1-(5-phospho-D-ribosyl)imidazole-4-carboxamide + (6S)-5,6,7,8-tetrahydrofolate. The catalysed reaction is IMP + H2O = 5-formamido-1-(5-phospho-D-ribosyl)imidazole-4-carboxamide. It functions in the pathway purine metabolism; IMP biosynthesis via de novo pathway; 5-formamido-1-(5-phospho-D-ribosyl)imidazole-4-carboxamide from 5-amino-1-(5-phospho-D-ribosyl)imidazole-4-carboxamide (10-formyl THF route): step 1/1. It participates in purine metabolism; IMP biosynthesis via de novo pathway; IMP from 5-formamido-1-(5-phospho-D-ribosyl)imidazole-4-carboxamide: step 1/1. This Janthinobacterium sp. (strain Marseille) (Minibacterium massiliensis) protein is Bifunctional purine biosynthesis protein PurH.